The chain runs to 68 residues: Antimicrobial peptide UyCT3 (68 aa).

The signal sequence occupies residues methionine 1–alanine 23. Position 36 is a phenylalanine amide (phenylalanine 36). Positions glycine 40–arginine 68 are excised as a propeptide.

The protein belongs to the non-disulfide-bridged peptide (NDBP) superfamily. Short antimicrobial peptide (group 4) family. Post-translationally, the non-amidated UyCT3 does not show antimicrobial activity. In terms of tissue distribution, expressed by the venom gland.

The protein resides in the secreted. The protein localises to the target cell membrane. Its function is as follows. Antimicrobial peptide that inhibits the growth of Gram-positive (S.aureus, MIC=10 uM) and Gram-negative bacteria (E.coli, MIC=15 uM and P.aeruginosa, MIC=6 uM). It also shows 35% of hemolysis when 15 uM are tested (95% at 50 uM). This is Antimicrobial peptide UyCT3 from Urodacus yaschenkoi (Inland robust scorpion).